A 249-amino-acid polypeptide reads, in one-letter code: Putative [LysW]-aminoadipate/[LysW]-glutamate kinase (249 aa).

Substrate contacts are provided by arginine 63 and asparagine 166.

Belongs to the acetylglutamate kinase family. LysZ subfamily.

Its subcellular location is the cytoplasm. It catalyses the reaction [amino-group carrier protein]-C-terminal-N-(1,4-dicarboxybutan-1-yl)-L-glutamine + ATP = [amino-group carrier protein]-C-terminal-N-(1-carboxy-5-phosphooxy-5-oxopentan-1-yl)-L-glutamine + ADP. The catalysed reaction is [amino-group carrier protein]-C-terminal-gamma-(L-glutamyl)-L-glutamate + ATP = [amino-group carrier protein]-C-terminal-gamma-(5-phospho-L-glutamyl)-L-glutamate + ADP. Its pathway is amino-acid biosynthesis; L-lysine biosynthesis via AAA pathway; L-lysine from L-alpha-aminoadipate (Thermus route): step 2/5. It functions in the pathway amino-acid biosynthesis; L-arginine biosynthesis. Involved in both the arginine and lysine biosynthetic pathways. Phosphorylates the LysW-bound precursors glutamate (for arginine biosynthesis), respectively alpha-aminoadipate (for lysine biosynthesis). This chain is Putative [LysW]-aminoadipate/[LysW]-glutamate kinase, found in Pyrococcus furiosus (strain ATCC 43587 / DSM 3638 / JCM 8422 / Vc1).